A 192-amino-acid chain; its full sequence is MSKLYFYYSAMNAGKTTALLQSSYNYQERGMRTLLYTAAVVCQKNDIKYIRSRIGLTSSARIFNGKTNLFKQISIVNKEKKIHCILIDECHFLNRNQVIDLTKVVDILNIPVLCYGLRTDFQSKLFSGSLWLLAWADKLIELKTICYCGRQANRVLRIDNNGCVIRAGSQIMFGDNNQYVSVCRKHFHKKYN.

ATP contacts are provided by residues 9-16 (SAMNAGKT) and 88-91 (DECH). Glu89 functions as the Proton acceptor in the catalytic mechanism. The Zn(2+) site is built by Cys146, Cys148, Cys183, and His186.

This sequence belongs to the thymidine kinase family. Homotetramer.

Its subcellular location is the cytoplasm. It carries out the reaction thymidine + ATP = dTMP + ADP + H(+). The chain is Thymidine kinase from Blochmanniella floridana.